Here is a 240-residue protein sequence, read N- to C-terminus: Ribonuclease HII (240 aa).

Positions 31-222 constitute an RNase H type-2 domain; that stretch reads RLIAGVDEAG…VRRALGLETA (192 aa). Residues Asp37, Glu38, and Asp130 each coordinate a divalent metal cation.

This sequence belongs to the RNase HII family. The cofactor is Mn(2+). Mg(2+) is required as a cofactor.

It localises to the cytoplasm. The enzyme catalyses Endonucleolytic cleavage to 5'-phosphomonoester.. In terms of biological role, endonuclease that specifically degrades the RNA of RNA-DNA hybrids. This Xanthomonas campestris pv. campestris (strain B100) protein is Ribonuclease HII.